The primary structure comprises 663 residues: UvrABC system protein B (663 aa).

Basic and acidic residues predominate over residues 1–10; sequence MIDKRDDKPF. Residues 1–23 form a disordered region; it reads MIDKRDDKPFKLKSKYKPSGDQP. Residues 31-418 form the Helicase ATP-binding domain; that stretch reads DNIEGGEKAQ…TNTIIEQIIR (388 aa). Position 44–51 (44–51) interacts with ATP; the sequence is GATGTGKT. Residues 97-120 carry the Beta-hairpin motif; it reads YYDYYQPEAYVPSSDTYIEKDSSV. The Helicase C-terminal domain maps to 435–601; that stretch reads QMDDLLGEIN…TIKKDIRGLI (167 aa). The region spanning 627 to 662 is the UVR domain; that stretch reads KEAINALQKQMQEAAELLDFELAAQMRDLILELKLM.

It belongs to the UvrB family. As to quaternary structure, forms a heterotetramer with UvrA during the search for lesions. Interacts with UvrC in an incision complex.

The protein localises to the cytoplasm. Its function is as follows. The UvrABC repair system catalyzes the recognition and processing of DNA lesions. A damage recognition complex composed of 2 UvrA and 2 UvrB subunits scans DNA for abnormalities. Upon binding of the UvrA(2)B(2) complex to a putative damaged site, the DNA wraps around one UvrB monomer. DNA wrap is dependent on ATP binding by UvrB and probably causes local melting of the DNA helix, facilitating insertion of UvrB beta-hairpin between the DNA strands. Then UvrB probes one DNA strand for the presence of a lesion. If a lesion is found the UvrA subunits dissociate and the UvrB-DNA preincision complex is formed. This complex is subsequently bound by UvrC and the second UvrB is released. If no lesion is found, the DNA wraps around the other UvrB subunit that will check the other stand for damage. The sequence is that of UvrABC system protein B from Streptococcus pyogenes serotype M28 (strain MGAS6180).